Consider the following 57-residue polypeptide: UPF0434 protein Shal_2504 (57 aa).

The protein belongs to the UPF0434 family.

The chain is UPF0434 protein Shal_2504 from Shewanella halifaxensis (strain HAW-EB4).